The sequence spans 352 residues: MGDTEQIPVGIIGASGYGGVQLVRLLIEHPNVEIVYLGGDSSAGKPYSDIYPHLFHCVNQPVEAIDIDEIASRCQVVFLGLPNGIACDLAPKLLEKGCKVLDLSADYRFRNLETYSTWYKKDRTDQAIAVRSVYGLPELYQQQIKESQLIGCPGCYPTASLLALAPLLKQGLIVPETAIIDAKSGTSGAGRQAKINALLAEADGSLGAYGVAKHRHTPEIEEVCSDLAGHEVTVQFTPHLIPMIRGILATVYATLRDPGLVREDLITIYNAFYRSSPFVKILPNGIYPQTKWACGTNLCYLGIEVDPRTDRVIVMSAIDNLIKGQAGQAVQCLNLMMGWEETLGLPQLCFYP.

Cys155 is a catalytic residue.

It belongs to the NAGSA dehydrogenase family. Type 1 subfamily.

Its subcellular location is the cytoplasm. The enzyme catalyses N-acetyl-L-glutamate 5-semialdehyde + phosphate + NADP(+) = N-acetyl-L-glutamyl 5-phosphate + NADPH + H(+). Its pathway is amino-acid biosynthesis; L-arginine biosynthesis; N(2)-acetyl-L-ornithine from L-glutamate: step 3/4. Its function is as follows. Catalyzes the NADPH-dependent reduction of N-acetyl-5-glutamyl phosphate to yield N-acetyl-L-glutamate 5-semialdehyde. This chain is N-acetyl-gamma-glutamyl-phosphate reductase, found in Gloeothece citriformis (strain PCC 7424) (Cyanothece sp. (strain PCC 7424)).